Here is a 43-residue protein sequence, read N- to C-terminus: METATLVAIFLSGLLVSFTGYALYTAFGQPSQQLRDPFEEHGD.

The helical transmembrane segment at 7-29 (VAIFLSGLLVSFTGYALYTAFGQ) threads the bilayer.

This sequence belongs to the PsbN family.

The protein localises to the plastid. It is found in the chloroplast thylakoid membrane. In terms of biological role, may play a role in photosystem I and II biogenesis. This Draba nemorosa (Woodland whitlowgrass) protein is Protein PsbN.